Here is a 191-residue protein sequence, read N- to C-terminus: Flavin reductase (NADH) (191 aa).

Residue tyrosine 46–alanine 52 participates in FAD binding. Residue serine 55 coordinates NAD(+). Arginine 72 to valine 73 contributes to the FAD binding site. NAD(+) is bound by residues histidine 144 and tyrosine 166 to arginine 169.

It belongs to the non-flavoprotein flavin reductase family.

The enzyme catalyses a reduced flavin + NAD(+) = an oxidized flavin + NADH + 2 H(+). Catalyzes the reduction of flavin by NADH. Subsequently, the reduced flavins is transferred to the tetracycline 7-halogenase CtcP. The chain is Flavin reductase (NADH) from Kitasatospora aureofaciens (Streptomyces aureofaciens).